We begin with the raw amino-acid sequence, 162 residues long: UPF0262 protein Pden_1958 (162 aa).

The tract at residues methionine 1–serine 22 is disordered.

It belongs to the UPF0262 family.

The chain is UPF0262 protein Pden_1958 from Paracoccus denitrificans (strain Pd 1222).